Reading from the N-terminus, the 213-residue chain is Pyrrolidone-carboxylate peptidase (213 aa).

Residues Glu81, Cys144, and His166 contribute to the active site.

The protein belongs to the peptidase C15 family. As to quaternary structure, homotetramer.

The protein localises to the cytoplasm. The enzyme catalyses Release of an N-terminal pyroglutamyl group from a polypeptide, the second amino acid generally not being Pro.. Removes 5-oxoproline from various penultimate amino acid residues except L-proline. This is Pyrrolidone-carboxylate peptidase from Pseudomonas fluorescens (strain SBW25).